A 237-amino-acid polypeptide reads, in one-letter code: 2,3,4,5-tetrahydropyridine-2,6-dicarboxylate N-acetyltransferase (237 aa).

This sequence belongs to the transferase hexapeptide repeat family. DapH subfamily.

The catalysed reaction is (S)-2,3,4,5-tetrahydrodipicolinate + acetyl-CoA + H2O = L-2-acetamido-6-oxoheptanedioate + CoA. It functions in the pathway amino-acid biosynthesis; L-lysine biosynthesis via DAP pathway; LL-2,6-diaminopimelate from (S)-tetrahydrodipicolinate (acetylase route): step 1/3. Functionally, catalyzes the transfer of an acetyl group from acetyl-CoA to tetrahydrodipicolinate. The polypeptide is 2,3,4,5-tetrahydropyridine-2,6-dicarboxylate N-acetyltransferase (Limosilactobacillus fermentum (strain NBRC 3956 / LMG 18251) (Lactobacillus fermentum)).